The sequence spans 159 residues: U1 small nuclear ribonucleoprotein C (159 aa).

A Matrin-type zinc finger spans residues 4 to 36 (FYCDYCDTYLTHDSPSVRKTHCSGRKHKENVKD). A disordered region spans residues 61 to 99 (KIPPTPFPGAPPPGGSLLPHPSIGGPPRPGMLPAPPMGG). Pro residues-rich tracts occupy residues 63–74 (PPTPFPGAPPPG) and 84–99 (GGPP…PMGG).

It belongs to the U1 small nuclear ribonucleoprotein C family. Component of the U1 snRNP. The U1 snRNP is composed of the U1 snRNA and the 7 core Sm proteins snrpb, snrpd1, snrpd2, snrpd3, snrpe, snrpf and snrpg that assemble in a heptameric protein ring on the Sm site of the small nuclear RNA to form the core snRNP, and at least 3 U1 snRNP-specific proteins snrnp70/U1-70K, snrpa/U1-A and snrpc/U1-C. snrpc/U1-C interacts with U1 snRNA and the 5' splice-site region of the pre-mRNA.

It is found in the nucleus. In terms of biological role, component of the spliceosomal U1 snRNP, which is essential for recognition of the pre-mRNA 5' splice-site and the subsequent assembly of the spliceosome. snrpc/U1-C is directly involved in initial 5' splice-site recognition for both constitutive and regulated alternative splicing. The interaction with the 5' splice-site seems to precede base-pairing between the pre-mRNA and the U1 snRNA. Stimulates commitment or early (E) complex formation by stabilizing the base pairing of the 5' end of the U1 snRNA and the 5' splice-site region. This Danio rerio (Zebrafish) protein is U1 small nuclear ribonucleoprotein C.